We begin with the raw amino-acid sequence, 193 residues long: dTTP/UTP pyrophosphatase (193 aa).

Asp71 (proton acceptor) is an active-site residue.

Belongs to the Maf family. YhdE subfamily. It depends on a divalent metal cation as a cofactor.

It is found in the cytoplasm. The catalysed reaction is dTTP + H2O = dTMP + diphosphate + H(+). It carries out the reaction UTP + H2O = UMP + diphosphate + H(+). Nucleoside triphosphate pyrophosphatase that hydrolyzes dTTP and UTP. May have a dual role in cell division arrest and in preventing the incorporation of modified nucleotides into cellular nucleic acids. This Geobacter sp. (strain M21) protein is dTTP/UTP pyrophosphatase.